We begin with the raw amino-acid sequence, 123 residues long: Thioredoxin domain-containing protein 17 (123 aa).

The Thioredoxin domain occupies 41–123 (SWCPDCVKAE…DLVRMMFTED (83 aa)). Active-site nucleophile residues include Cys-43 and Cys-46. A disulfide bridge connects residues Cys-43 and Cys-46.

The protein belongs to the thioredoxin family.

The protein resides in the cytoplasm. Its function is as follows. Disulfide reductase. May participate in various redox reactions through the reversible oxidation of its active center dithiol to a disulfide and catalyze dithiol-disulfide exchange reactions. Has peroxidase activity and may contribute to the elimination of cellular hydrogen peroxide. The polypeptide is Thioredoxin domain-containing protein 17 (txndc17) (Danio rerio (Zebrafish)).